We begin with the raw amino-acid sequence, 261 residues long: MTLKARVIPCLDVKDGRVVKGVNFVDLIDAGDPVEAARAYDAAGADELCFLDITASSDNRETIFDVIARTAEQCFMPLTVGGGVRQVSDIRKLLLAGADKVSINTAAVKNPEFVAEAADKFGDQCIVVAIDAKKVSGEGEADRWEIFTHGGRQTTGIDAVEFAQKVVSLGAGEILLTSMDRDGTKAGYDVALTRAVADSVRVPVIASGGVGNLDHMVAGIRDGHATAVLAASIFHFGTYTIGEAKRYMAEAGIPMRLDPVR.

Residues Asp-12 and Asp-131 contribute to the active site.

It belongs to the HisA/HisF family. Heterodimer of HisH and HisF.

It is found in the cytoplasm. The enzyme catalyses 5-[(5-phospho-1-deoxy-D-ribulos-1-ylimino)methylamino]-1-(5-phospho-beta-D-ribosyl)imidazole-4-carboxamide + L-glutamine = D-erythro-1-(imidazol-4-yl)glycerol 3-phosphate + 5-amino-1-(5-phospho-beta-D-ribosyl)imidazole-4-carboxamide + L-glutamate + H(+). It functions in the pathway amino-acid biosynthesis; L-histidine biosynthesis; L-histidine from 5-phospho-alpha-D-ribose 1-diphosphate: step 5/9. In terms of biological role, IGPS catalyzes the conversion of PRFAR and glutamine to IGP, AICAR and glutamate. The HisF subunit catalyzes the cyclization activity that produces IGP and AICAR from PRFAR using the ammonia provided by the HisH subunit. In Brucella anthropi (strain ATCC 49188 / DSM 6882 / CCUG 24695 / JCM 21032 / LMG 3331 / NBRC 15819 / NCTC 12168 / Alc 37) (Ochrobactrum anthropi), this protein is Imidazole glycerol phosphate synthase subunit HisF.